The following is a 468-amino-acid chain: Probable Xaa-Pro aminopeptidase PEPP (468 aa).

Residues Asp-264, Asp-275, Glu-398, and Glu-438 each coordinate Mn(2+).

The protein belongs to the peptidase M24B family. Mn(2+) is required as a cofactor.

The enzyme catalyses Release of any N-terminal amino acid, including proline, that is linked to proline, even from a dipeptide or tripeptide.. Its function is as follows. Catalyzes the removal of a penultimate prolyl residue from the N-termini of peptides. This is Probable Xaa-Pro aminopeptidase PEPP (PEPP) from Ajellomyces dermatitidis (strain ER-3 / ATCC MYA-2586) (Blastomyces dermatitidis).